Reading from the N-terminus, the 154-residue chain is MSTTLAIVRLDPGLPLPSRAHDGDAGVDLYSAEDVELAPGRRALVRTGVAVAVPFGMVGLVHPRSGLATRVGLSIVNSPGTIDAGYRGEIKVALINLDPAAPIVVHRGDRIAQLLVQRVELVELVEVSSFDEAGLASTSRGDGGHGSSGGHASL.

Substrate contacts are provided by residues 64–66 (RSG), N77, 81–83 (TID), and K91.

Belongs to the dUTPase family. As to quaternary structure, homotrimer. The cofactor is Mg(2+).

The enzyme catalyses dUTP + H2O = dUMP + diphosphate + H(+). The protein operates within pyrimidine metabolism; dUMP biosynthesis; dUMP from dCTP (dUTP route): step 2/2. In terms of biological role, this enzyme is involved in nucleotide metabolism: it produces dUMP, the immediate precursor of thymidine nucleotides and it decreases the intracellular concentration of dUTP so that uracil cannot be incorporated into DNA. This chain is Deoxyuridine 5'-triphosphate nucleotidohydrolase, found in Mycobacterium bovis (strain BCG / Pasteur 1173P2).